The following is a 45-amino-acid chain: Large ribosomal subunit protein bL34 (45 aa).

The interval 1–45 is disordered; it reads MTKRTFQPNNRRRARKHGFRARMRTRAGRAILSARRGKNRAELSA. Basic residues predominate over residues 10–27; the sequence is NRRRARKHGFRARMRTRA.

The protein belongs to the bacterial ribosomal protein bL34 family.

This is Large ribosomal subunit protein bL34 from Micrococcus luteus (strain ATCC 4698 / DSM 20030 / JCM 1464 / CCM 169 / CCUG 5858 / IAM 1056 / NBRC 3333 / NCIMB 9278 / NCTC 2665 / VKM Ac-2230) (Micrococcus lysodeikticus).